The primary structure comprises 405 residues: Tryptophan synthase beta chain (405 aa).

Lys-96 is subject to N6-(pyridoxal phosphate)lysine.

It belongs to the TrpB family. As to quaternary structure, tetramer of two alpha and two beta chains. Requires pyridoxal 5'-phosphate as cofactor.

The enzyme catalyses (1S,2R)-1-C-(indol-3-yl)glycerol 3-phosphate + L-serine = D-glyceraldehyde 3-phosphate + L-tryptophan + H2O. The protein operates within amino-acid biosynthesis; L-tryptophan biosynthesis; L-tryptophan from chorismate: step 5/5. The beta subunit is responsible for the synthesis of L-tryptophan from indole and L-serine. This Clostridium botulinum (strain Alaska E43 / Type E3) protein is Tryptophan synthase beta chain.